The sequence spans 444 residues: Serine--tRNA ligase (444 aa).

Residue 249-251 participates in L-serine binding; the sequence is TAE. ATP contacts are provided by residues 280-282 and V296; that span reads RRE. E303 serves as a coordination point for L-serine. 367 to 370 is an ATP binding site; that stretch reads EIVS. T401 provides a ligand contact to L-serine.

It belongs to the class-II aminoacyl-tRNA synthetase family. Type-1 seryl-tRNA synthetase subfamily. In terms of assembly, homodimer. The tRNA molecule binds across the dimer.

The protein localises to the cytoplasm. The catalysed reaction is tRNA(Ser) + L-serine + ATP = L-seryl-tRNA(Ser) + AMP + diphosphate + H(+). It catalyses the reaction tRNA(Sec) + L-serine + ATP = L-seryl-tRNA(Sec) + AMP + diphosphate + H(+). It participates in aminoacyl-tRNA biosynthesis; selenocysteinyl-tRNA(Sec) biosynthesis; L-seryl-tRNA(Sec) from L-serine and tRNA(Sec): step 1/1. Functionally, catalyzes the attachment of serine to tRNA(Ser). Is also able to aminoacylate tRNA(Sec) with serine, to form the misacylated tRNA L-seryl-tRNA(Sec), which will be further converted into selenocysteinyl-tRNA(Sec). The chain is Serine--tRNA ligase from Picrophilus torridus (strain ATCC 700027 / DSM 9790 / JCM 10055 / NBRC 100828 / KAW 2/3).